The sequence spans 8545 residues: Nuclear anchorage protein 1 (8545 aa).

The actin-binding stretch occupies residues 1–325; that stretch reads MSSSPPARPC…VITYVSQFVR (325 aa). At 1-8494 the chain is on the cytoplasmic side; it reads MSSSPPARPC…QRSRWRRVLR (8494 aa). The Calponin-homology (CH) 1 domain maps to 23 to 130; the sequence is KAQKNTFTRW…LIWQIILHFQ (108 aa). A disordered region spans residues 148–197; the sequence is TEEPTSSAQPEVVVTAPSPTPSSKKSHSKVSSLSGSKTSLASGEKAPSSP. Over residues 159–190 the composition is skewed to low complexity; that stretch reads VVVTAPSPTPSSKKSHSKVSSLSGSKTSLASG. The 107-residue stretch at 222-328 folds into the Calponin-homology (CH) 2 domain; it reads QSVEQVFLRW…YVSQFVRMFG (107 aa). Coiled coils occupy residues 754 to 774, 1072 to 1101, 1215 to 1236, 1324 to 1384, 1574 to 1629, 1725 to 1754, 1950 to 1981, 2103 to 2580, 2682 to 2712, 2852 to 2949, 3002 to 3119, 3178 to 3295, 3346 to 3417, 3482 to 3552, 3587 to 3703, 3781 to 3839, 3902 to 4022, 4114 to 4198, and 4249 to 4320; these read NIRD…NHSR, SFFQ…LMVH, ADIL…EIQA, DTKK…QFED, RSIE…DLVK, ENRN…YEDA, PAII…NYNQ, DNIE…KKSD, SVKE…KIAK, IMQE…NIGK, DQIV…KTVV, DDEK…DEFK, QLQH…PEND, DELI…EKSL, KAEE…ELLD, ALKA…KEQL, AAHD…KTVV, and LDVA…DEFK. Residues 3010–3019 are compositionally biased toward basic and acidic residues; the sequence is EAEDVTAKES. The segment at 3010 to 3033 is disordered; the sequence is EAEDVTAKESAKKKKKDKKKSPQE. Tandem repeats lie at residues 3241 to 4143, 4144 to 5097, 5098 to 6000, 6001 to 6903, 6904 to 7806, and 7807 to 8199. Residues 3241-8199 form a 6 X tandem repeat region; that stretch reads QVAKDIKDSK…TLIPDLEERA (4959 aa). Residues 3913–3922 show a composition bias toward basic and acidic residues; the sequence is EAEDVTAKES. Residues 3913–3936 form a disordered region; that stretch reads EAEDVTAKESAKKKKKDKKKSPQE. Over residues 4372–4393 the composition is skewed to basic and acidic residues; it reads ITREDGGDDNKSPDELIDDRGR. Positions 4372-4395 are disordered; sequence ITREDGGDDNKSPDELIDDRGRST. Coiled coils occupy residues 4436-4506, 4541-4657, 4735-4793, 4856-4976, 5035-5152, 5203-5274, 5339-5409, 5444-5560, 5638-5696, 5759-5879, 5938-6055, 6106-6177, 6242-6312, 6347-6463, 6541-6599, 6662-6782, 6841-6958, 7009-7080, 7145-7215, 7250-7366, 7444-7502, 7565-7685, 7744-7861, 7912-7983, 8048-8118, 8153-8204, 8273-8329, and 8370-8390; these read DELI…EKSL, KAEE…ELLD, ALKA…KEQL, AAHD…KTVV, DDEK…DEFK, QLQH…PEND, KAEE…IWER, VAED…DINN, and STSI…KEIE. The span at 4867 to 4876 shows a compositional bias: basic and acidic residues; sequence EAEDVTAKES. The tract at residues 4867-4890 is disordered; sequence EAEDVTAKESAKKKKKDKKKSPQE. Residues 5770–5779 show a composition bias toward basic and acidic residues; sequence EAEDVTAKES. The tract at residues 5770 to 5793 is disordered; it reads EAEDVTAKESAKKKKKDKKKSPQE. Positions 6673 to 6682 are enriched in basic and acidic residues; sequence EAEDVTAKES. Residues 6673–6696 form a disordered region; it reads EAEDVTAKESAKKKKKDKKKSPQE. Over residues 7576-7585 the composition is skewed to basic and acidic residues; it reads EAEDVTAKES. Positions 7576 to 7599 are disordered; the sequence is EAEDVTAKESAKKKKKDKKKSPQE. Disordered stretches follow at residues 8391–8418 and 8449–8480; these read PRLQ…KPYD and SDSE…LSEE. Residues 8401 to 8411 are compositionally biased toward acidic residues; it reads DNEDDEDEEKG. Residues 8451–8464 show a composition bias toward basic and acidic residues; it reads SESRSEFDSLDSRS. Residues 8486 to 8545 form the KASH domain; sequence RSRWRRVLRTALPLQALLVLLMGAACLVPHCDDEYCCQLLNNFAKSFDPSLEFVNGPPPF. Residues 8495 to 8513 traverse the membrane as a helical; Anchor for type IV membrane protein segment; the sequence is TALPLQALLVLLMGAACLV. Residues 8514 to 8545 lie on the Perinuclear space side of the membrane; that stretch reads PHCDDEYCCQLLNNFAKSFDPSLEFVNGPPPF.

This sequence belongs to the nesprin family. In terms of assembly, interacts with F-actin via its N-terminal domain. Most likely interacts with unc-84; the interaction is probably required to recruit anc-1 to the nuclear envelope. As to expression, ubiquitously expressed in all postembryonic cells.

The protein localises to the nucleus outer membrane. It localises to the cytoplasm. It is found in the cytoskeleton. Functionally, plays a central role in nuclear and mitochondrial anchoring. Probably connects nuclei to the cytoskeleton by interacting with unc-84 at the nuclear envelope and with F-actin in the cytoplasm, creating a bridge across the nuclear envelope between the cytoskeleton and the nucleus. Has a role in positioning of the cell body of the PVQ lumbar interneuron. This Caenorhabditis elegans protein is Nuclear anchorage protein 1.